The chain runs to 316 residues: 4-hydroxy-3-methylbut-2-enyl diphosphate reductase (316 aa).

Cys-12 is a [4Fe-4S] cluster binding site. (2E)-4-hydroxy-3-methylbut-2-enyl diphosphate contacts are provided by His-41 and His-74. The dimethylallyl diphosphate site is built by His-41 and His-74. Positions 41 and 74 each coordinate isopentenyl diphosphate. Cys-96 contributes to the [4Fe-4S] cluster binding site. Position 124 (His-124) interacts with (2E)-4-hydroxy-3-methylbut-2-enyl diphosphate. His-124 lines the dimethylallyl diphosphate pocket. Position 124 (His-124) interacts with isopentenyl diphosphate. Glu-126 (proton donor) is an active-site residue. Thr-167 contributes to the (2E)-4-hydroxy-3-methylbut-2-enyl diphosphate binding site. Cys-197 serves as a coordination point for [4Fe-4S] cluster. (2E)-4-hydroxy-3-methylbut-2-enyl diphosphate is bound by residues Ser-225, Ser-226, Asn-227, and Ser-269. Ser-225, Ser-226, Asn-227, and Ser-269 together coordinate dimethylallyl diphosphate. Positions 225, 226, 227, and 269 each coordinate isopentenyl diphosphate.

This sequence belongs to the IspH family. In terms of assembly, homodimer. Requires [4Fe-4S] cluster as cofactor.

The enzyme catalyses isopentenyl diphosphate + 2 oxidized [2Fe-2S]-[ferredoxin] + H2O = (2E)-4-hydroxy-3-methylbut-2-enyl diphosphate + 2 reduced [2Fe-2S]-[ferredoxin] + 2 H(+). The catalysed reaction is dimethylallyl diphosphate + 2 oxidized [2Fe-2S]-[ferredoxin] + H2O = (2E)-4-hydroxy-3-methylbut-2-enyl diphosphate + 2 reduced [2Fe-2S]-[ferredoxin] + 2 H(+). Its pathway is isoprenoid biosynthesis; dimethylallyl diphosphate biosynthesis; dimethylallyl diphosphate from (2E)-4-hydroxy-3-methylbutenyl diphosphate: step 1/1. It functions in the pathway isoprenoid biosynthesis; isopentenyl diphosphate biosynthesis via DXP pathway; isopentenyl diphosphate from 1-deoxy-D-xylulose 5-phosphate: step 6/6. In terms of biological role, catalyzes the conversion of 1-hydroxy-2-methyl-2-(E)-butenyl 4-diphosphate (HMBPP) into a mixture of isopentenyl diphosphate (IPP) and dimethylallyl diphosphate (DMAPP). Acts in the terminal step of the DOXP/MEP pathway for isoprenoid precursor biosynthesis. The protein is 4-hydroxy-3-methylbut-2-enyl diphosphate reductase of Salmonella schwarzengrund (strain CVM19633).